Here is a 175-residue protein sequence, read N- to C-terminus: Alkyl hydroperoxide reductase AhpD (175 aa).

Catalysis depends on cysteine 131, which acts as the Proton donor. The cysteines at positions 131 and 134 are disulfide-linked. Cysteine 134 (cysteine sulfenic acid (-SOH) intermediate) is an active-site residue.

Belongs to the AhpD family.

The catalysed reaction is N(6)-[(R)-dihydrolipoyl]-L-lysyl-[lipoyl-carrier protein] + a hydroperoxide = N(6)-[(R)-lipoyl]-L-lysyl-[lipoyl-carrier protein] + an alcohol + H2O. In terms of biological role, antioxidant protein with alkyl hydroperoxidase activity. Required for the reduction of the AhpC active site cysteine residues and for the regeneration of the AhpC enzyme activity. This Brucella canis (strain ATCC 23365 / NCTC 10854 / RM-666) protein is Alkyl hydroperoxide reductase AhpD.